A 234-amino-acid polypeptide reads, in one-letter code: Sugar fermentation stimulation protein homolog (234 aa).

Belongs to the SfsA family.

In Shewanella baltica (strain OS195), this protein is Sugar fermentation stimulation protein homolog.